The primary structure comprises 177 residues: ATP-dependent protease subunit HslV (177 aa).

Residue Thr4 is part of the active site. 3 residues coordinate Na(+): Ser159, Cys162, and Thr165.

The protein belongs to the peptidase T1B family. HslV subfamily. A double ring-shaped homohexamer of HslV is capped on each side by a ring-shaped HslU homohexamer. The assembly of the HslU/HslV complex is dependent on binding of ATP.

It localises to the cytoplasm. The catalysed reaction is ATP-dependent cleavage of peptide bonds with broad specificity.. Its activity is regulated as follows. Allosterically activated by HslU binding. Protease subunit of a proteasome-like degradation complex believed to be a general protein degrading machinery. This Mesorhizobium japonicum (strain LMG 29417 / CECT 9101 / MAFF 303099) (Mesorhizobium loti (strain MAFF 303099)) protein is ATP-dependent protease subunit HslV.